The primary structure comprises 605 residues: Protein Spindly (605 aa).

Residue methionine 1 is modified to N-acetylmethionine. Residues 2-442 (EADIITNLRC…ELKLKYEPEE (441 aa)) are a coiled coil. Phosphoserine is present on residues serine 513, serine 515, and serine 555. The segment at 544–580 (ALSERSGNTPNSPRLAAESKLQTEVKEGKETSSKLEK) is disordered. A compositionally biased stretch (basic and acidic residues) spans 564-580 (LQTEVKEGKETSSKLEK).

The protein belongs to the Spindly family. As to quaternary structure, interacts with KNTC1 and ZW10. These interactions appear weak and may be transient or indirect. Interacts with dynein intermediate chain and dynactin (DCTN1). Interacts with the catalytically active form of USP45. Post-translationally, monoubiquitinated with'Lys-48' linkage. Deubiquitinated by USP45.

It is found in the cytoplasm. The protein resides in the cytoskeleton. Its subcellular location is the microtubule organizing center. The protein localises to the centrosome. It localises to the chromosome. It is found in the centromere. The protein resides in the kinetochore. Its subcellular location is the nucleus. The protein localises to the spindle pole. Required for the localization of dynein and dynactin to the mitotic kintochore. Dynein is believed to control the initial lateral interaction between the kinetochore and spindle microtubules and to facilitate the subsequent formation of end-on kinetochore-microtubule attachments mediated by the NDC80 complex. Also required for correct spindle orientation. Does not appear to be required for the removal of spindle assembly checkpoint (SAC) proteins from the kinetochore upon bipolar spindle attachment. Acts as an adapter protein linking the dynein motor complex to various cargos and converts dynein from a non-processive to a highly processive motor in the presence of dynactin. Facilitates the interaction between dynein and dynactin and activates dynein processivity (the ability to move along a microtubule for a long distance without falling off the track). Plays a role in cell migration. This chain is Protein Spindly, found in Homo sapiens (Human).